A 147-amino-acid chain; its full sequence is MGHFTEEDKATITSLWGKVNVEDAGGETLGRLLVVYPWTQRFFDSFGNLSSASAIMGNPKVKAHGKKVLTSLGDAIKHLDDLKGTFAQLSELHCDKLHVDPENFKLLGNVLVTVLAIHFGKEFTPEVQASWQKMVTGVASALSSRYH.

The 145-residue stretch at 3 to 147 (HFTEEDKATI…VASALSSRYH (145 aa)) folds into the Globin domain. Residue T13 is modified to Phosphothreonine. S45, S51, and S53 each carry phosphoserine. The residue at position 60 (K60) is an N6-acetyllysine. Residue H64 participates in heme b binding. N6-acetyllysine is present on K83. Residue H93 participates in heme b binding. C94 is modified (S-nitrosocysteine). Phosphoserine occurs at positions 140, 143, and 144.

Belongs to the globin family. In terms of assembly, heterotetramer of two alpha chains and two gamma chains in fetal hemoglobin (Hb F). Red blood cells.

Its function is as follows. Gamma chains make up the fetal hemoglobin F, in combination with alpha chains. This chain is Hemoglobin subunit gamma-2 (HBG2), found in Gorilla gorilla gorilla (Western lowland gorilla).